Reading from the N-terminus, the 370-residue chain is MDSYWRLKNLVNDLPVSTSLSRQGSIYSWTVDQFQTSLGLDCGSMNMDELVKHISSAEETQEGSQRQGSTTLPPTLSKQNVGEVWKSITEEKHTNNNGGVTNITHLQGQQTLGEITLEEFFIRAGARGGNTNGGSIHDSSSSISGNPHTSLGVQIQPKAMVSDFMNNMVPRSHDSYLHQNVNGSMSTYQPQQSIMSMPNGYSYGKQIRFSNGSLGSGNQSLQDTKRSLVPSVATIPSEAITCSPVTPFPTLNGKQKINGESSLLSPSPYISNGSTSTRGGKINSEITAEKQFVDKKLRRKIKNRESAARSRARKQAQTMEVEVELENLKKDYEELLKQHVELRKRQMEPGMISLHERPERKLRRTKSDIK.

3 positions are modified to phosphoserine: serine 25, serine 44, and serine 69. A disordered region spans residues 56–77; that stretch reads SAEETQEGSQRQGSTTLPPTLS. Residues 62–77 are compositionally biased toward polar residues; that stretch reads EGSQRQGSTTLPPTLS. The residue at position 111 (threonine 111) is a Phosphothreonine. A compositionally biased stretch (polar residues) spans 260–278; that stretch reads ESSLLSPSPYISNGSTSTR. The tract at residues 260-281 is disordered; sequence ESSLLSPSPYISNGSTSTRGGK. The region spanning 293–356 is the bZIP domain; that stretch reads VDKKLRRKIK…MEPGMISLHE (64 aa). The tract at residues 295 to 314 is basic motif; the sequence is KKLRRKIKNRESAARSRARK. The leucine-zipper stretch occupies residues 328 to 342; sequence LKKDYEELLKQHVEL. The tract at residues 349–370 is disordered; sequence PGMISLHERPERKLRRTKSDIK. Over residues 354-370 the composition is skewed to basic and acidic residues; sequence LHERPERKLRRTKSDIK.

It belongs to the bZIP family. ABI5 subfamily. In terms of assembly, DNA-binding heterodimer.

Its subcellular location is the nucleus. Could participate in abscisic acid-regulated gene expression. The sequence is that of ABSCISIC ACID-INSENSITIVE 5-like protein 8 (BZIP15) from Arabidopsis thaliana (Mouse-ear cress).